The following is a 607-amino-acid chain: UvrABC system protein C (607 aa).

In terms of domain architecture, GIY-YIG spans 15–94 (ENPGVYLMKN…IKRHRPYFNV (80 aa)). One can recognise a UVR domain in the interval 204–239 (DQVLKLLIRLMNEASARLDYETAALRRDQIASIKEV).

The protein belongs to the UvrC family. In terms of assembly, interacts with UvrB in an incision complex.

The protein localises to the cytoplasm. The UvrABC repair system catalyzes the recognition and processing of DNA lesions. UvrC both incises the 5' and 3' sides of the lesion. The N-terminal half is responsible for the 3' incision and the C-terminal half is responsible for the 5' incision. This chain is UvrABC system protein C, found in Dehalococcoides mccartyi (strain ATCC BAA-2100 / JCM 16839 / KCTC 5957 / BAV1).